A 116-amino-acid chain; its full sequence is Ly-6/neurotoxin-like protein 1 (116 aa).

An N-terminal signal peptide occupies residues 1 to 20 (MTPLLTLFLVALIGLPLAQA). The region spanning 21-105 (LDCHVCAYNG…FAAPATLALA (85 aa)) is the UPAR/Ly6 domain. Cystine bridges form between Cys-23/Cys-46, Cys-26/Cys-33, Cys-39/Cys-64, Cys-68/Cys-85, and Cys-86/Cys-91. A lipid anchor (GPI-anchor amidated asparagine) is attached at Asn-92. Positions 93–116 (GAGFAAPATLALAPILLATLWGLL) are cleaved as a propeptide — removed in mature form.

As to quaternary structure, interacts with nAChRs containing alpha-4:beta-2 (CHRNA4:CHRNB2) and alpha-7 (CHRNA7) subunits. Interacts with CHRNA4 probably in the endoplasmic reticulum prior to nAChR pentameric assembly. Interacts with KCNA2/Potassium voltage-gated channel subfamily A member 2.

It is found in the cell membrane. Its subcellular location is the cell projection. The protein localises to the dendrite. The protein resides in the endoplasmic reticulum. In terms of biological role, acts in different tissues through interaction to nicotinic acetylcholine receptors (nAChRs). The proposed role as modulator of nAChR activity seems to be dependent on the nAChR subtype and stoichiometry, and to involve an effect on nAChR trafficking and its cell surface expression, and on single channel properties of the nAChR inserted in the plasma membrane. Modulates functional properties of nicotinic acetylcholine receptors (nAChRs) to prevent excessive excitation, and hence neurodegeneration. Enhances desensitization by increasing both the rate and extent of desensitization of alpha-4:beta-2-containing nAChRs and slowing recovery from desensitization. Promotes large amplitude ACh-evoked currents through alpha-4:beta-2 nAChRs. Is involved in regulation of the nAChR pentameric assembly in the endoplasmic reticulum. Shifts stoichiometry from high sensitivity alpha-4(2):beta-2(3) to low sensitivity alpha-4(3):beta-2(2) nAChR. In vitro modulates alpha-3:beta-4-containing nAChRs. Reduces cell surface expression of (alpha-3:beta-4)(2):beta-4 and (alpha-3:beta-4)(2):alpha-5 nAChRs suggesting an interaction with nAChR alpha-3(-):(+)beta-4 subunit interfaces and an allosteric mode. Corresponding single channel effects characterized by decreased unitary conductance, altered burst proportions and enhanced desensitization/inactivation seem to depend on nAChR alpha:alpha subunit interfaces and are greater in (alpha-3:beta-2)(2):alpha-3 when compared to (alpha-3:beta-2)(2):alpha-5 nAChRs. Prevents plasticity in the primary visual cortex late in life. This chain is Ly-6/neurotoxin-like protein 1, found in Saimiri boliviensis boliviensis (Bolivian squirrel monkey).